The following is a 350-amino-acid chain: Secreted effector protein PipB2 (350 aa).

Pentapeptide repeat domains lie at 162-201 (ANLT…NLSG), 202-241 (ASLG…SLLG), 247-286 (CNCS…IMEG), and 287-326 (AVLT…TLTD).

As to quaternary structure, interacts with the host kinesin light chain (KLC), a subunit of the kinesin-1 motor complex.

The protein localises to the secreted. Its subcellular location is the host membrane. Functionally, effector proteins function to alter host cell physiology and promote bacterial survival in host tissues. Involved in the reorganization of late endosome/lysosome (LE/Lys) compartments in mammalian cells. Necessary and sufficient to link kinesin-1 onto the Salmonella-containing vacuole (SCV) membrane. Required for centrifugal extension of lysosomal glycoprotein-rich membrane tubules, known as Salmonella-induced filaments (Sifs), away from the SCV and toward the cell periphery. Required for virulence, but not for intracellular survival and replication in phagocytic cells. The protein is Secreted effector protein PipB2 (pipB2) of Salmonella typhi.